A 299-amino-acid polypeptide reads, in one-letter code: ATP phosphoribosyltransferase (299 aa).

It belongs to the ATP phosphoribosyltransferase family. Long subfamily. As to quaternary structure, equilibrium between an active dimeric form, an inactive hexameric form and higher aggregates. Interconversion between the various forms is largely reversible and is influenced by the natural substrates and inhibitors of the enzyme. The cofactor is Mg(2+).

It localises to the cytoplasm. It carries out the reaction 1-(5-phospho-beta-D-ribosyl)-ATP + diphosphate = 5-phospho-alpha-D-ribose 1-diphosphate + ATP. It participates in amino-acid biosynthesis; L-histidine biosynthesis; L-histidine from 5-phospho-alpha-D-ribose 1-diphosphate: step 1/9. With respect to regulation, feedback inhibited by histidine. Its function is as follows. Catalyzes the condensation of ATP and 5-phosphoribose 1-diphosphate to form N'-(5'-phosphoribosyl)-ATP (PR-ATP). Has a crucial role in the pathway because the rate of histidine biosynthesis seems to be controlled primarily by regulation of HisG enzymatic activity. The polypeptide is ATP phosphoribosyltransferase (Erwinia tasmaniensis (strain DSM 17950 / CFBP 7177 / CIP 109463 / NCPPB 4357 / Et1/99)).